A 476-amino-acid chain; its full sequence is Nuclear envelope morphology protein 1 (476 aa).

A disordered region spans residues 47–74 (RRRSSYSASSLSSLSSKPTEKEVPTRNE). Residues 51–62 (SYSASSLSSLSS) show a composition bias toward low complexity. Positions 64 to 74 (PTEKEVPTRNE) are enriched in basic and acidic residues. The helical transmembrane segment at 123-139 (FFWGLCRFVFFPVLLSY) threads the bilayer. Disordered stretches follow at residues 164–190 (SSHQ…SNGN) and 232–256 (GKAN…PAND). The segment covering 234 to 256 (ANSNRSGHSHQPQSTQFSPPAND) has biased composition (polar residues). N-linked (GlcNAc...) asparagine glycans are attached at residues asparagine 237, asparagine 257, asparagine 284, and asparagine 356. The FCP1 homology domain occupies 299-460 (SKLPRKTLVL…LNLLSFLHAL (162 aa)).

The protein belongs to the Dullard family. As to quaternary structure, component of the nem1-spo7 complex.

It is found in the endoplasmic reticulum membrane. It localises to the nucleus membrane. The catalysed reaction is O-phospho-L-seryl-[protein] + H2O = L-seryl-[protein] + phosphate. It carries out the reaction O-phospho-L-threonyl-[protein] + H2O = L-threonyl-[protein] + phosphate. Catalytic component of the nem1-spo7 complex which acts as a phosphatase and may be required for proper nuclear membrane morphology. The chain is Nuclear envelope morphology protein 1 (nem1) from Schizosaccharomyces pombe (strain 972 / ATCC 24843) (Fission yeast).